The sequence spans 212 residues: Transcriptional regulator GfcR (212 aa).

It belongs to the purine/pyrimidine phosphoribosyltransferase family. GfcR subfamily.

Functionally, DNA-binding transcriptional regulator that functions as a regulator of central sugar catabolic pathways. This Halobacterium salinarum (strain ATCC 29341 / DSM 671 / R1) protein is Transcriptional regulator GfcR.